A 197-amino-acid chain; its full sequence is ATP-dependent Clp protease proteolytic subunit 1 (197 aa).

Catalysis depends on serine 100, which acts as the Nucleophile. Histidine 125 is an active-site residue.

It belongs to the peptidase S14 family. In terms of assembly, fourteen ClpP subunits assemble into 2 heptameric rings which stack back to back to give a disk-like structure with a central cavity, resembling the structure of eukaryotic proteasomes.

The protein localises to the cytoplasm. It carries out the reaction Hydrolysis of proteins to small peptides in the presence of ATP and magnesium. alpha-casein is the usual test substrate. In the absence of ATP, only oligopeptides shorter than five residues are hydrolyzed (such as succinyl-Leu-Tyr-|-NHMec, and Leu-Tyr-Leu-|-Tyr-Trp, in which cleavage of the -Tyr-|-Leu- and -Tyr-|-Trp bonds also occurs).. In terms of biological role, cleaves peptides in various proteins in a process that requires ATP hydrolysis. Has a chymotrypsin-like activity. Plays a major role in the degradation of misfolded proteins. This Gloeobacter violaceus (strain ATCC 29082 / PCC 7421) protein is ATP-dependent Clp protease proteolytic subunit 1.